A 166-amino-acid polypeptide reads, in one-letter code: Thiol peroxidase (166 aa).

The 149-residue stretch at 18–166 (LKVGDKAPDV…NYEALLKVLK (149 aa)) folds into the Thioredoxin domain. Residue Cys60 is the Cysteine sulfenic acid (-SOH) intermediate of the active site. Cysteines 60 and 94 form a disulfide.

The protein belongs to the peroxiredoxin family. Tpx subfamily. In terms of assembly, homodimer.

It carries out the reaction a hydroperoxide + [thioredoxin]-dithiol = an alcohol + [thioredoxin]-disulfide + H2O. Functionally, thiol-specific peroxidase that catalyzes the reduction of hydrogen peroxide and organic hydroperoxides to water and alcohols, respectively. Plays a role in cell protection against oxidative stress by detoxifying peroxides. The chain is Thiol peroxidase from Helicobacter pylori (strain J99 / ATCC 700824) (Campylobacter pylori J99).